A 108-amino-acid polypeptide reads, in one-letter code: Alkyltransferase-like protein 1 (108 aa).

It belongs to the MGMT family. ATL subfamily.

Functionally, involved in DNA damage recognition. Binds DNA containing O(6)-methylguanine and larger O(6)-alkylguanine adducts. The DNA is bent, the damaged base is rotated out of the DNA duplex into a hydrophobic binding pocket (nucleotide flipping), with Arg-39 donating a hydrogen bond to the orphaned cytosine to stabilize the extrahelical DNA conformation. This structural change in DNA presents the lesion to the nucleotide excision repair (NER) pathway. The affinity for O(6)-alkylguanine adducts increases with the size of the alkyl group. Low affinity small O(6)-alkylguanines are directed to the global genome repair pathway of NER via rhp7-rhp16 and rhp41-rhp23, while strong binding to bulky O(6)-alkylguanines stalls the transcription machinery and diverts the damage to the transcription-coupled repair pathway of NER via rhp26. This chain is Alkyltransferase-like protein 1, found in Schizosaccharomyces pombe (strain 972 / ATCC 24843) (Fission yeast).